Here is a 601-residue protein sequence, read N- to C-terminus: Methionine--tRNA ligase (601 aa).

Residues 21 to 31 carry the 'HIGH' region motif; it reads PYANGPRHIGH. Positions 153, 156, 166, and 169 each coordinate Zn(2+). Asn361 is an ATP binding site.

Belongs to the class-I aminoacyl-tRNA synthetase family. MetG type 1 subfamily. As to quaternary structure, monomer. It depends on Zn(2+) as a cofactor.

It localises to the cytoplasm. It catalyses the reaction tRNA(Met) + L-methionine + ATP = L-methionyl-tRNA(Met) + AMP + diphosphate. In terms of biological role, is required not only for elongation of protein synthesis but also for the initiation of all mRNA translation through initiator tRNA(fMet) aminoacylation. This Cutibacterium acnes (strain DSM 16379 / KPA171202) (Propionibacterium acnes) protein is Methionine--tRNA ligase.